The chain runs to 151 residues: Small ribosomal subunit protein uS11 (151 aa).

This sequence belongs to the universal ribosomal protein uS11 family.

The chain is Small ribosomal subunit protein uS11 (RPS14) from Podocoryna carnea (Hydrozoan).